The sequence spans 909 residues: WD repeat-containing protein 20 homolog (909 aa).

Residues 58–132 (SPAQGKLGSD…SAGNNTVEAR (75 aa)) form a disordered region. Composition is skewed to low complexity over residues 80 to 107 (GANT…AISN) and 115 to 127 (SHSN…AGNN). WD repeat units lie at residues 248-288 (IDKT…AATA), 321-362 (TDNC…GIAR), 363-402 (SYFG…VVAR), and 470-517 (ADRN…LRHP). 5 disordered regions span residues 458 to 483 (FEGF…FRSD), 554 to 628 (SGQA…AGSV), 661 to 699 (SDSI…NSGS), 720 to 739 (SEKK…RQHR), and 749 to 775 (NQHN…GHSS). Composition is skewed to polar residues over residues 555-569 (GQAT…SCSP) and 595-606 (TANCTISSQSSP). Low complexity-rich tracts occupy residues 612-628 (EAAT…AGSV) and 673-699 (GQRP…NSGS). One copy of the WD 5 repeat lies at 856–893 (IAHERLTALIFREDCFLTACQDGFIYTWARPGHATHAT).

Component of the Usp12-46 deubiquitylase complex consisting of Usp12-46, Wdr20 and Uaf1; regulatory subunit that, together with Uaf1, stabilizes Usp12-46. The Usp12-46 deubiquitylase complex associates with arr/arrow; the interaction leads to deubiquitination and stabilization of arr/arrow.

Regulatory component of the Usp12-46 deubiquitylase complex. This complex deubiquitylates the wg/wingless-signaling receptor arr/arrow, which stabilizes the receptor and increases its concentration at the cell surface; this enhances the sensitivity of cells to wg/wingless-signal stimulation. This increases the amplitude and spatial range of the signaling response to the wg/wingless morphogen gradient, facilitating the precise concentration-dependent regulation of its target genes. Required for wg/wingless-mediated signaling in the wing imaginal disc and for wg/wingless-dependent regulation of intestinal stem cell proliferation. The protein is WD repeat-containing protein 20 homolog of Drosophila melanogaster (Fruit fly).